A 97-amino-acid polypeptide reads, in one-letter code: UPF0235 protein Daro_3887 (97 aa).

This sequence belongs to the UPF0235 family.

This is UPF0235 protein Daro_3887 from Dechloromonas aromatica (strain RCB).